A 514-amino-acid chain; its full sequence is Pentatricopeptide repeat-containing protein At4g26800 (514 aa).

11 PPR repeats span residues 122–156, 157–191, 192–226, 227–261, 262–296, 297–331, 332–366, 367–401, 402–436, 437–471, and 472–510; these read DLYT…GIEP, DIVT…GIKR, DVVV…GISP, NVVT…KINP, NVIT…SIDP, NVFT…GCTP, NVVT…GVAA, NTVS…GLIP, NIRS…RNDL, DIIT…RVEP, and DFKA…ESAP.

Belongs to the PPR family. P subfamily.

The chain is Pentatricopeptide repeat-containing protein At4g26800 from Arabidopsis thaliana (Mouse-ear cress).